A 984-amino-acid chain; its full sequence is Ephrin type-B receptor 1 (984 aa).

The region spanning glutamate 1–glutamine 182 is the Eph LBD domain. The Extracellular portion of the chain corresponds to glutamate 1 to leucine 541. Fibronectin type-III domains are found at residues valine 303–alanine 413 and alanine 414–aspartate 528. Residues asparagine 315, asparagine 407, and asparagine 480 are each glycosylated (N-linked (GlcNAc...) asparagine). A helical membrane pass occupies residues isoleucine 542–valine 562. Over cysteine 563 to alanine 984 the chain is Cytoplasmic. Residues valine 619–isoleucine 882 form the Protein kinase domain. ATP is bound by residues isoleucine 625–valine 633 and lysine 651. Aspartate 744 acts as the Proton acceptor in catalysis. The 65-residue stretch at threonine 911 to glutamine 975 folds into the SAM domain. The PDZ-binding motif lies at serine 982–alanine 984.

The protein belongs to the protein kinase superfamily. Tyr protein kinase family. Ephrin receptor subfamily. In terms of assembly, heterotetramer upon binding of the ligand. The heterotetramer is composed of an ephrin dimer and a receptor dimer. Oligomerization is probably required to induce biological responses. In terms of processing, phosphorylated. Autophosphorylation is stimulated by ligands. In terms of tissue distribution, expressed at high levels in the 10-day embryo, and in adult brain, lung, heart and skeletal muscle. Low levels of expression detected in all other adult tissues tested.

It localises to the cell membrane. Its subcellular location is the early endosome membrane. It is found in the cell projection. The protein resides in the dendrite. It catalyses the reaction L-tyrosyl-[protein] + ATP = O-phospho-L-tyrosyl-[protein] + ADP + H(+). Functionally, receptor tyrosine kinase which binds promiscuously transmembrane ephrin-B family ligands residing on adjacent cells, leading to contact-dependent bidirectional signaling into neighboring cells. The signaling pathway downstream of the receptor is referred to as forward signaling while the signaling pathway downstream of the ephrin ligand is referred to as reverse signaling. May play a role in axon guidance during nervous system development. May also play an important redundant role with other ephrin-B receptors in development and maturation of dendritic spines and synapse formation. More generally, may play a role in targeted cell migration and adhesion. Upon activation by ephrin-B ligands activates the MAPK/ERK and the JNK signaling cascades to regulate cell migration and adhesion respectively. This is Ephrin type-B receptor 1 (EPHB1) from Gallus gallus (Chicken).